Here is a 196-residue protein sequence, read N- to C-terminus: Pro-FMRFamide-related neuropeptide VF (196 aa).

The first 21 residues, 1–21 (MEIISLKRFILLMLATSSLLT), serve as a signal peptide directing secretion. The propeptide occupies 22–57 (SNIFCTDESRMPNLYSKKNYDKYSEPRGDLGWEKER). Residue F92 is modified to Phenylalanine amide. 2 propeptides span residues 95–99 (NMEEE) and 115–121 (NREDSLS). A Phenylalanine amide modification is found at F131. A propeptide spanning residues 134 to 196 (TTTAKSITKT…IDDAELKQEK (63 aa)) is cleaved from the precursor.

Belongs to the FARP (FMRFamide related peptide) family.

It is found in the secreted. Functionally, efficiently inhibits forskolin-induced production of cAMP. Acts as a potent negative regulator of gonadotropin synthesis and secretion. Induces secretion of prolactin. Its function is as follows. Efficiently inhibits forskolin-induced production of cAMP. Blocks morphine-induced analgesia. In terms of biological role, shows no inhibitory activity of forskolin-induced production of cAMP. The protein is Pro-FMRFamide-related neuropeptide VF (NPVF) of Bos taurus (Bovine).